We begin with the raw amino-acid sequence, 86 residues long: Small ribosomal subunit protein uS17 (86 aa).

Belongs to the universal ribosomal protein uS17 family. As to quaternary structure, part of the 30S ribosomal subunit.

One of the primary rRNA binding proteins, it binds specifically to the 5'-end of 16S ribosomal RNA. This Dehalococcoides mccartyi (strain ATCC BAA-2266 / KCTC 15142 / 195) (Dehalococcoides ethenogenes (strain 195)) protein is Small ribosomal subunit protein uS17.